The primary structure comprises 185 residues: MHILGIDPGSRNCGYAIINYAPHVNSLKLIEAGIIKIKERDLQTQIMEFVEGIDLVIKNIHIDEVAIEDIFFAYNPQSVIKLAQFRGALSLKILQEIGNFSEYTPLQVKKAITGNGKADKTQVAFMVKRILGLKGEIKPLDITDAIAIAITHSQRIKTNDVHSTPNLQRAMPLKSLSANPSKGCI.

Active-site residues include Asp7, Glu68, and Asp141. 3 residues coordinate Mg(2+): Asp7, Glu68, and Asp141.

The protein belongs to the RuvC family. In terms of assembly, homodimer which binds Holliday junction (HJ) DNA. The HJ becomes 2-fold symmetrical on binding to RuvC with unstacked arms; it has a different conformation from HJ DNA in complex with RuvA. In the full resolvosome a probable DNA-RuvA(4)-RuvB(12)-RuvC(2) complex forms which resolves the HJ. Mg(2+) serves as cofactor.

It is found in the cytoplasm. It catalyses the reaction Endonucleolytic cleavage at a junction such as a reciprocal single-stranded crossover between two homologous DNA duplexes (Holliday junction).. Its function is as follows. The RuvA-RuvB-RuvC complex processes Holliday junction (HJ) DNA during genetic recombination and DNA repair. Endonuclease that resolves HJ intermediates. Cleaves cruciform DNA by making single-stranded nicks across the HJ at symmetrical positions within the homologous arms, yielding a 5'-phosphate and a 3'-hydroxyl group; requires a central core of homology in the junction. The consensus cleavage sequence is 5'-(A/T)TT(C/G)-3'. Cleavage occurs on the 3'-side of the TT dinucleotide at the point of strand exchange. HJ branch migration catalyzed by RuvA-RuvB allows RuvC to scan DNA until it finds its consensus sequence, where it cleaves and resolves the cruciform DNA. The chain is Crossover junction endodeoxyribonuclease RuvC from Helicobacter hepaticus (strain ATCC 51449 / 3B1).